Consider the following 183-residue polypeptide: NEDD8-conjugating enzyme Ubc12 (183 aa).

M1 is modified (N-acetylmethionine). The tract at residues 1-28 (MIKLFSLKQQKKEEESAGGTKGSSKKAS) is disordered. The region spanning 29-173 (AAQLRIQKDI…VQRSMRGGYI (145 aa)) is the UBC core domain. C111 functions as the Glycyl thioester intermediate in the catalytic mechanism.

This sequence belongs to the ubiquitin-conjugating enzyme family. UBC12 subfamily. The acetylation of Met-1 increases affinity for DCUN1D1 by about 2 orders of magnitude and is crucial for NEDD8 transfer to cullins.

It carries out the reaction [E1 NEDD8-activating enzyme]-S-[NEDD8 protein]-yl-L-cysteine + [E2 NEDD8-conjugating enzyme]-L-cysteine = [E1 NEDD8-activating enzyme]-L-cysteine + [E2 NEDD8-conjugating enzyme]-S-[NEDD8-protein]-yl-L-cysteine.. Its pathway is protein modification; protein neddylation. Functionally, accepts the ubiquitin-like protein NEDD8 from the UBA3-NAE1 E1 complex and catalyzes its covalent attachment to other proteins. The specific interaction with the E3 ubiquitin ligase rbx1, but not rbx2, suggests that the rbx1-ube2m complex neddylates specific target proteins, such as cul1, cul2, cul3 and cul4. Involved in cell proliferation. This is NEDD8-conjugating enzyme Ubc12 (ube2m) from Xenopus tropicalis (Western clawed frog).